The primary structure comprises 214 residues: Thymidylate kinase (214 aa).

10–17 lines the ATP pocket; the sequence is GIDGCGKT.

It belongs to the thymidylate kinase family.

The enzyme catalyses dTMP + ATP = dTDP + ADP. Phosphorylation of dTMP to form dTDP in both de novo and salvage pathways of dTTP synthesis. This chain is Thymidylate kinase, found in Prochlorococcus marinus subsp. pastoris (strain CCMP1986 / NIES-2087 / MED4).